The chain runs to 622 residues: Protein translocase subunit SecD (622 aa).

6 consecutive transmembrane segments (helical) span residues phenylalanine 6–valine 26, alanine 460–tyrosine 480, methionine 485–phenylalanine 505, proline 512–phenylalanine 532, alanine 559–valine 579, and glycine 584–threonine 604.

It belongs to the SecD/SecF family. SecD subfamily. Forms a complex with SecF. Part of the essential Sec protein translocation apparatus which comprises SecA, SecYEG and auxiliary proteins SecDF. Other proteins may also be involved.

The protein resides in the cell inner membrane. In terms of biological role, part of the Sec protein translocase complex. Interacts with the SecYEG preprotein conducting channel. SecDF uses the proton motive force (PMF) to complete protein translocation after the ATP-dependent function of SecA. This Rhodothermus marinus (strain ATCC 43812 / DSM 4252 / R-10) (Rhodothermus obamensis) protein is Protein translocase subunit SecD.